The following is a 247-amino-acid chain: ATP synthase subunit a, chloroplastic (247 aa).

5 consecutive transmembrane segments (helical) span residues 38-58, 95-115, 134-154, 199-219, and 220-240; these read QVLI…IVTV, VPFI…GALL, INTT…AGLS, LVVV…VMFL, and GLFT…AYIG.

Belongs to the ATPase A chain family. F-type ATPases have 2 components, CF(1) - the catalytic core - and CF(0) - the membrane proton channel. CF(1) has five subunits: alpha(3), beta(3), gamma(1), delta(1), epsilon(1). CF(0) has four main subunits: a, b, b' and c.

It is found in the plastid. The protein localises to the chloroplast thylakoid membrane. Its function is as follows. Key component of the proton channel; it plays a direct role in the translocation of protons across the membrane. The polypeptide is ATP synthase subunit a, chloroplastic (Populus trichocarpa (Western balsam poplar)).